The following is a 248-amino-acid chain: UDP-2,3-diacylglucosamine hydrolase (248 aa).

5 residues coordinate Mn(2+): Asp8, His10, Asp41, Asn79, and His114. Residue 79-80 (NR) coordinates substrate. Substrate-binding residues include Asp122, Ser160, Asp171, Gln174, and His202. Residues His202 and His204 each contribute to the Mn(2+) site.

This sequence belongs to the LpxH family. Requires Mn(2+) as cofactor.

It localises to the cell inner membrane. The catalysed reaction is UDP-2-N,3-O-bis[(3R)-3-hydroxytetradecanoyl]-alpha-D-glucosamine + H2O = 2-N,3-O-bis[(3R)-3-hydroxytetradecanoyl]-alpha-D-glucosaminyl 1-phosphate + UMP + 2 H(+). It participates in glycolipid biosynthesis; lipid IV(A) biosynthesis; lipid IV(A) from (3R)-3-hydroxytetradecanoyl-[acyl-carrier-protein] and UDP-N-acetyl-alpha-D-glucosamine: step 4/6. In terms of biological role, hydrolyzes the pyrophosphate bond of UDP-2,3-diacylglucosamine to yield 2,3-diacylglucosamine 1-phosphate (lipid X) and UMP by catalyzing the attack of water at the alpha-P atom. Involved in the biosynthesis of lipid A, a phosphorylated glycolipid that anchors the lipopolysaccharide to the outer membrane of the cell. The chain is UDP-2,3-diacylglucosamine hydrolase from Stenotrophomonas maltophilia (strain K279a).